The following is a 177-amino-acid chain: Translation initiation factor IF-3 (177 aa).

The protein belongs to the IF-3 family. As to quaternary structure, monomer.

The protein localises to the cytoplasm. Its function is as follows. IF-3 binds to the 30S ribosomal subunit and shifts the equilibrium between 70S ribosomes and their 50S and 30S subunits in favor of the free subunits, thus enhancing the availability of 30S subunits on which protein synthesis initiation begins. The polypeptide is Translation initiation factor IF-3 (Nitratiruptor sp. (strain SB155-2)).